Here is a 1026-residue protein sequence, read N- to C-terminus: MRLGSNSYDVQRTEAIGQTPVKTPPPNQIRCTVTFLDSTSYHFEIEKNSLGIVLLEKVFNYLEIIEKDYFGLVFIAVDNSSAQQKKWLDPSKNLRKQMICPPYHLFFRVKFYVRDPNRLRDEFTRFQFYQQVRQNLEEGRLPCNEGSLALLASYVVQAEVGDFEEKTHGMSRTCLCYKIQFATLPDDFSDRVAELHQLHIGQTPDVAEQNFLDHARRLEMYGMDVYDGVDANHLPIEIGVGAVGIKVFHEGIKMNEYAWVRIRKLSFKKKQFQVLVANEDGVSETIMIFNIMSAKICKLLWKCCIEQHTFFRLKTPPKTPQRKVFNFGSKFRYSGRTEYQTLEENEHRKSAGHRNFHRSLSKSSFLRSTFSGNTQSIDSSRYTNTTTTDSPELPSSGQLLARRLLSAARHDTDSSDALGYASDGAVVCAPLTTPLSPRRTRDYATDSESSAPSLRQQRLSKEAIYYGTQESCDEKSWTPSMACTSTSPGIHASTASVRPVSSGSTPNGASRKSANSGYSGYGYATQTQQPTSTTNASYSPYLNGTISRSSGAAVAKAAARGLPPTNQQAYNTSSPRNSVASYSSFASAGIGGSPPRSKRSPQSNKSSSPVGEDQVVTIKMRPDRHGRFGFNVKGGADQNYPVIVSRVAPGSSADKCQPRLNEGDQVLFIDGRDVSTMSHDHVVQFIRSARSGLNGGELHLTIRPNVYRLGEEVDEPDSTMVPEPARVADSVPNSDKLSKSLQLLADSLNSGKVVDHFEMLYRKKPGMSMNICRLTANLAKNRYRDVCPYDDTRVTLQASPSGDYINANYVNMEIPSSGIVNRYIACQGPLAHTSSDFWVMVWEQHCTTIVMLTTITERGRVKCHQYWPRVFETQEYGRLMIKCIKDKQTTNCCYREFSIRDRNSSEERRVTQMQYIAWPDHGVPDDPKHFIQFVDEVRKARQGSVDPIVVHCSAGIGRTGVLILMETAACLVESNEPVYPLDIVRTMRDQRAMLIQTPGQYTFVCESILRAYHDGTIKPLAEYSKR.

In terms of domain architecture, FERM spans 29 to 315 (IRCTVTFLDS…EQHTFFRLKT (287 aa)). 4 disordered regions span residues 376–396 (SIDS…LPSS), 430–456 (PLTT…SLRQ), 489–515 (GIHA…KSAN), and 584–616 (SFAS…DQVV). Positions 446–456 (DSESSAPSLRQ) are enriched in polar residues. Low complexity predominate over residues 600–609 (SPQSNKSSSP). The region spanning 617–689 (TIKMRPDRHG…DHVVQFIRSA (73 aa)) is the PDZ domain. One can recognise a Tyrosine-protein phosphatase domain in the interval 753–1011 (VVDHFEMLYR…TFVCESILRA (259 aa)). Substrate is bound by residues Asp-920, 952-958 (CSAGIGR), and Gln-996. The active-site Phosphocysteine intermediate is Cys-952.

Belongs to the protein-tyrosine phosphatase family. Non-receptor class subfamily.

It is found in the cytoplasm. Its subcellular location is the cytoskeleton. The enzyme catalyses O-phospho-L-tyrosyl-[protein] + H2O = L-tyrosyl-[protein] + phosphate. This is Tyrosine-protein phosphatase 1 (ptp-1) from Caenorhabditis elegans.